Consider the following 313-residue polypeptide: HPr kinase/phosphorylase (313 aa).

Active-site residues include histidine 140 and lysine 161. Residue 155-162 (GNSGAGKS) coordinates ATP. Serine 162 provides a ligand contact to Mg(2+). The active-site Proton acceptor; for phosphorylation activity. Proton donor; for dephosphorylation activity is the aspartate 179. The segment at 203–212 (IEVRGLGILN) is important for the catalytic mechanism of both phosphorylation and dephosphorylation. Glutamate 204 is a binding site for Mg(2+). Arginine 246 is a catalytic residue. Positions 267-272 (PVAAGR) are important for the catalytic mechanism of dephosphorylation.

The protein belongs to the HPrK/P family. In terms of assembly, homohexamer. Requires Mg(2+) as cofactor.

The catalysed reaction is [HPr protein]-L-serine + ATP = [HPr protein]-O-phospho-L-serine + ADP + H(+). The enzyme catalyses [HPr protein]-O-phospho-L-serine + phosphate + H(+) = [HPr protein]-L-serine + diphosphate. Functionally, catalyzes the ATP- as well as the pyrophosphate-dependent phosphorylation of a specific serine residue in HPr, a phosphocarrier protein of the phosphoenolpyruvate-dependent sugar phosphotransferase system (PTS). HprK/P also catalyzes the pyrophosphate-producing, inorganic phosphate-dependent dephosphorylation (phosphorolysis) of seryl-phosphorylated HPr (P-Ser-HPr). In Azoarcus sp. (strain BH72), this protein is HPr kinase/phosphorylase.